Consider the following 394-residue polypeptide: DNA primase large subunit PriL (394 aa).

Residues C231, C340, C351, and C357 each coordinate [4Fe-4S] cluster.

The protein belongs to the eukaryotic-type primase large subunit family. As to quaternary structure, heterodimer of a small subunit (PriS) and a large subunit (PriL). Requires [4Fe-4S] cluster as cofactor.

Functionally, regulatory subunit of DNA primase, an RNA polymerase that catalyzes the synthesis of short RNA molecules used as primers for DNA polymerase during DNA replication. Stabilizes and modulates the activity of the small subunit, increasing the rate of DNA synthesis, and conferring RNA synthesis capability. The DNA polymerase activity may enable DNA primase to also catalyze primer extension after primer synthesis. May also play a role in DNA repair. The sequence is that of DNA primase large subunit PriL from Pyrococcus horikoshii (strain ATCC 700860 / DSM 12428 / JCM 9974 / NBRC 100139 / OT-3).